The following is an 810-amino-acid chain: Calpain-3 (810 aa).

Over residues 9–27 the composition is skewed to low complexity; that stretch reads VAQQTAAGSVPSTTSTTTE. The interval 9-31 is disordered; sequence VAQQTAAGSVPSTTSTTTEGTGG. Residues 68 to 410 form the Calpain catalytic domain; it reads LYEDPDFPPN…FTKLEICNLT (343 aa). Catalysis depends on residues cysteine 123, histidine 327, and asparagine 351. Residues 411 to 579 are domain III; the sequence is PDTLEADKLQ…KRSLSEEVEN (169 aa). The tract at residues 578–639 is disordered; it reads ENMIEADRPS…SAKAREKSEE (62 aa). Residues 580-638 are linker; sequence MIEADRPSKKKKGKPIIFVSDRANSNKELTTDEDAGKDGEKTHVDEKKRSSAKAREKSE. Positions 613-639 are enriched in basic and acidic residues; that stretch reads DAGKDGEKTHVDEKKRSSAKAREKSEE. EF-hand domains are found at residues 638 to 672, 681 to 714, 711 to 746, and 776 to 810; these read EEET…VVKK, FELE…DKIK, DKIK…AGFR, and VRLD…TMYA. The interval 639-809 is domain IV; that stretch reads EETQFRNIFR…VLEWLQLTMY (171 aa). Ca(2+)-binding residues include alanine 651, aspartate 654, glutamate 656, glutamate 661, aspartate 694, aspartate 696, serine 698, lysine 700, glutamate 705, aspartate 724, aspartate 726, serine 728, threonine 730, glutamate 735, aspartate 789, aspartate 791, aspartate 793, and isoleucine 795.

Belongs to the peptidase C2 family. As to quaternary structure, homodimer; via EF-hand domain 4. Interacts with TTN/titin. Interacts with CMYA5; this interaction, which results in CMYA5 proteolysis, may protect CAPN3 from autolysis. Interacts with SIMC1. Interacts with UTP25; the interaction is required for CAPN3 translocation to the nucleolus. As to expression, skeletal muscle. Low levels in spleen, intestine and bone.

The protein resides in the cytoplasm. It localises to the nucleus. The protein localises to the nucleolus. The enzyme catalyses Broad endopeptidase activity.. Activated by micromolar concentrations of calcium and inhibited by calpastatin. Functionally, calcium-regulated non-lysosomal thiol-protease. Proteolytically cleaves CTBP1. Mediates, with UTP25, the proteasome-independent degradation of p53/TP53. The polypeptide is Calpain-3 (CAPN3) (Gallus gallus (Chicken)).